A 469-amino-acid chain; its full sequence is Probable NADPH:adrenodoxin oxidoreductase, mitochondrial (469 aa).

The N-terminal 38 residues, 1–38 (MLSRFIKRTYSTQTSSPVVGIIGSGPAAFYTAHRLLRN), are a transit peptide targeting the mitochondrion. Positions 27, 48, 56, and 92 each coordinate FAD. Residues 164–167 (HGNV), 208–209 (RR), and Glu-220 contribute to the NADP(+) site. Residues Trp-375 and 382–384 (GVI) contribute to the FAD site. Position 382 (Gly-382) interacts with NADP(+).

It belongs to the ferredoxin--NADP reductase type 1 family. Requires FAD as cofactor.

The protein resides in the mitochondrion inner membrane. It carries out the reaction 2 reduced [adrenodoxin] + NADP(+) + H(+) = 2 oxidized [adrenodoxin] + NADPH. In terms of biological role, adrenodoxin reductase transfers electrons from NADPH to adrenodoxin, which is involved in heme A biosynthesis and in iron-sulfur cluster assembly. Involved in the electron transfer to heme A synthase etp1(cd), a heme protein that catalyzes the conversion of heme O to heme A. Required for the de novo synthesis of Fe-S clusters on iron sulfur cluster assembly protein isu1. Involved in electron delivery for Fe-S cluster synthesis. Essential for coenzyme Q biosynthesis. May be involved in the electron transfer required for the hydroxylation reaction performed by coq6. May play a role in cellular and mitochondrial iron homeostasis. This Schizosaccharomyces pombe (strain 972 / ATCC 24843) (Fission yeast) protein is Probable NADPH:adrenodoxin oxidoreductase, mitochondrial (arh1).